The chain runs to 449 residues: Glucose-6-phosphate isomerase (449 aa).

Glutamate 291 serves as the catalytic Proton donor. Active-site residues include histidine 312 and lysine 426.

It belongs to the GPI family.

Its subcellular location is the cytoplasm. It catalyses the reaction alpha-D-glucose 6-phosphate = beta-D-fructose 6-phosphate. Its pathway is carbohydrate biosynthesis; gluconeogenesis. It participates in carbohydrate degradation; glycolysis; D-glyceraldehyde 3-phosphate and glycerone phosphate from D-glucose: step 2/4. In terms of biological role, catalyzes the reversible isomerization of glucose-6-phosphate to fructose-6-phosphate. This is Glucose-6-phosphate isomerase from Streptococcus pyogenes serotype M12 (strain MGAS2096).